The chain runs to 718 residues: Polyribonucleotide nucleotidyltransferase (718 aa).

Mg(2+) contacts are provided by Asp487 and Asp493. One can recognise a KH domain in the interval 554 to 613; sequence PRIETFKIPTDKIREVIGTGGKVIREIVEKTGAKVNIEDDGTVKVASSDGESIKAAIKWI. An S1 motif domain is found at 623 to 691; sequence GEIYEGTVVK…DRGKTRLSMK (69 aa). The interval 692–718 is disordered; that stretch reads VVDQETGEDLEAKQKAEGDAPREAAGE. Basic and acidic residues predominate over residues 701–718; it reads LEAKQKAEGDAPREAAGE.

Belongs to the polyribonucleotide nucleotidyltransferase family. Mg(2+) serves as cofactor.

It localises to the cytoplasm. It carries out the reaction RNA(n+1) + phosphate = RNA(n) + a ribonucleoside 5'-diphosphate. Involved in mRNA degradation. Catalyzes the phosphorolysis of single-stranded polyribonucleotides processively in the 3'- to 5'-direction. The chain is Polyribonucleotide nucleotidyltransferase from Nitrobacter winogradskyi (strain ATCC 25391 / DSM 10237 / CIP 104748 / NCIMB 11846 / Nb-255).